The primary structure comprises 286 residues: Light-independent protochlorophyllide reductase iron-sulfur ATP-binding protein (286 aa).

Residues 10 to 15 and K39 each bind ATP; that span reads GIGKST. S14 contributes to the Mg(2+) binding site. C95 and C129 together coordinate [4Fe-4S] cluster. 180–181 contributes to the ATP binding site; that stretch reads NR.

Belongs to the NifH/BchL/ChlL family. In terms of assembly, homodimer. Protochlorophyllide reductase is composed of three subunits; ChlL, ChlN and ChlB. [4Fe-4S] cluster is required as a cofactor.

It carries out the reaction chlorophyllide a + oxidized 2[4Fe-4S]-[ferredoxin] + 2 ADP + 2 phosphate = protochlorophyllide a + reduced 2[4Fe-4S]-[ferredoxin] + 2 ATP + 2 H2O. It participates in porphyrin-containing compound metabolism; chlorophyll biosynthesis (light-independent). In terms of biological role, component of the dark-operative protochlorophyllide reductase (DPOR) that uses Mg-ATP and reduced ferredoxin to reduce ring D of protochlorophyllide (Pchlide) to form chlorophyllide a (Chlide). This reaction is light-independent. The L component serves as a unique electron donor to the NB-component of the complex, and binds Mg-ATP. The chain is Light-independent protochlorophyllide reductase iron-sulfur ATP-binding protein from Synechococcus elongatus (strain ATCC 33912 / PCC 7942 / FACHB-805) (Anacystis nidulans R2).